Reading from the N-terminus, the 78-residue chain is Small ribosomal subunit protein bS18 (78 aa).

This sequence belongs to the bacterial ribosomal protein bS18 family. Part of the 30S ribosomal subunit. Forms a tight heterodimer with protein bS6.

In terms of biological role, binds as a heterodimer with protein bS6 to the central domain of the 16S rRNA, where it helps stabilize the platform of the 30S subunit. The polypeptide is Small ribosomal subunit protein bS18 (Levilactobacillus brevis (strain ATCC 367 / BCRC 12310 / CIP 105137 / JCM 1170 / LMG 11437 / NCIMB 947 / NCTC 947) (Lactobacillus brevis)).